The primary structure comprises 138 residues: Rapid alkalinization factor 23 (138 aa).

The signal sequence occupies residues 1 to 28 (MRGLSRNSGAAAIFAILLILAVHNWSVA). Positions 29-88 (VSSQSTEFAGDFPPFETECRGTIAECSVSAALGDGGDLFYGGGEMGEEFEMDSEINRRIL) are cleaved as a propeptide — removed in mature form. 2 disulfide bridges follow: cysteine 106–cysteine 116 and cysteine 129–cysteine 135.

Belongs to the plant rapid alkalinization factor (RALF) family. In terms of processing, proteolytically cleaved, probably by SBT6.1 (S1P), a subtilisin-like serine protease (subtilase).

It is found in the secreted. Its function is as follows. Cell signaling peptide that may regulate plant stress, growth, and development. Mediates a rapid alkalinization of extracellular space by mediating a transient increase in the cytoplasmic Ca(2+) concentration leading to a calcium-dependent signaling events through a cell surface receptor and a concomitant activation of some intracellular mitogen-activated protein kinases. Negatively regulates brassinolide (BL)-mediated signaling pathway (e.g. BL-induced hypocotyl elongation and branching limitation). The protein is Rapid alkalinization factor 23 (RALF23) of Arabidopsis thaliana (Mouse-ear cress).